A 303-amino-acid polypeptide reads, in one-letter code: N-acetyl-D-glucosamine kinase (303 aa).

ATP is bound by residues G4 to K11 and G133 to F140. H157, C177, C179, and C184 together coordinate Zn(2+).

This sequence belongs to the ROK (NagC/XylR) family. NagK subfamily.

It catalyses the reaction N-acetyl-D-glucosamine + ATP = N-acetyl-D-glucosamine 6-phosphate + ADP + H(+). The protein operates within cell wall biogenesis; peptidoglycan recycling. Functionally, catalyzes the phosphorylation of N-acetyl-D-glucosamine (GlcNAc) derived from cell-wall degradation, yielding GlcNAc-6-P. The polypeptide is N-acetyl-D-glucosamine kinase (Escherichia fergusonii (strain ATCC 35469 / DSM 13698 / CCUG 18766 / IAM 14443 / JCM 21226 / LMG 7866 / NBRC 102419 / NCTC 12128 / CDC 0568-73)).